The primary structure comprises 858 residues: Ubiquitin carboxyl-terminal hydrolase 5 (858 aa).

Ala-2 bears the N-acetylalanine mark. The segment at Arg-74–Pro-96 is disordered. Residue Lys-113 forms a Glycyl lysine isopeptide (Lys-Gly) (interchain with G-Cter in SUMO) linkage. A phosphoserine mark is found at Ser-149 and Ser-156. The UBP-type; degenerate zinc finger occupies Gln-175–Met-283. Cys-195 and Cys-816 form a disulfide bridge. The Zn(2+) site is built by Cys-199 and Cys-202. A substrate-binding site is contributed by Trp-209. Position 219 (Cys-219) interacts with Zn(2+). A substrate-binding site is contributed by Arg-221–Phe-224. His-232 contacts Zn(2+). Residues Tyr-259, Tyr-261, and Asp-264 each coordinate substrate. Thr-292 is modified (phosphothreonine). Residues Thr-326–Val-856 enclose the USP domain. Cys-335 acts as the Nucleophile in catalysis. Thr-623 is subject to Phosphothreonine. UBA domains follow at residues Met-654–His-695 and Pro-722–His-762. A phosphoserine mark is found at Ser-779, Ser-783, and Ser-785. Residue His-818 is the Proton acceptor of the active site.

The protein belongs to the peptidase C19 family. As to quaternary structure, homodimer. Interacts with TRIML1. Post-translationally, ubiquitinated by SMURF1; leading to proteasomal degradation. SUMOylated at Lys-113; SUMOylation affects the interaction with Cav3.2 channels.

It localises to the cytoplasm. Its subcellular location is the stress granule. It is found in the nucleus. It catalyses the reaction Thiol-dependent hydrolysis of ester, thioester, amide, peptide and isopeptide bonds formed by the C-terminal Gly of ubiquitin (a 76-residue protein attached to proteins as an intracellular targeting signal).. Its function is as follows. Deubiquitinating enzyme that participates in a wide range of cellular processes by specifically cleaving isopeptide bonds between ubiquitin and substrate proteins or ubiquitin itself. Affects thereby important cellular signaling pathways such as NF-kappa-B, Wnt/beta-catenin, and cytokine production by regulating ubiquitin-dependent protein degradation. Participates in the activation of the Wnt signaling pathway by promoting FOXM1 deubiquitination and stabilization that induces the recruitment of beta-catenin to Wnt target gene promoter. Regulates the assembly and disassembly of heat-induced stress granules by mediating the hydrolysis of unanchored ubiquitin chains. Promotes lipopolysaccharide-induced apoptosis and inflammatory response by stabilizing the TXNIP protein. Affects T-cell biology by stabilizing the inhibitory receptor on T-cells PDC1. Acts as a negative regulator of autophagy by regulating ULK1 at both protein and mRNA levels. Acts also as a negative regulator of type I interferon production by simultaneously removing both 'Lys-48'-linked unanchored and 'Lys-63'-linked anchored polyubiquitin chains on the transcription factor IRF3. Modulates the stability of DNA mismatch repair protein MLH1 and counteracts the effect of the ubiquitin ligase UBR4. Upon activation by insulin, it gets phosphorylated through mTORC1-mediated phosphorylation to enhance YTHDF1 stability by removing 'Lys-11'-linked polyubiquitination. May also deubiquitinate other substrates such as the calcium channel CACNA1H. In Homo sapiens (Human), this protein is Ubiquitin carboxyl-terminal hydrolase 5 (USP5).